Reading from the N-terminus, the 354-residue chain is MTSPLITKAEVNSVFQGRSLLAEKDFTPAEINYLVDFGLHLKALKQQNIPHHYLEGKNIALLFAKTSTRTRAAFTTAAIDLGAHPEYLGANDIQLGIKESTEDTARVLGSMFDAIERRGFSQKEVEDLAKYSGVPVWNGLTDDWHPTQMIADFMTVKENFGYLKGLTLVYVGDGRNNMANSLIVTGSMLGVNVHIVAPDSLHPSKEVMDIANKFAEKSGAKPLATSNIEEGVKGANIIYSDVWVSMGESNWEERVKLLTPYRITMDMLKMTGNADNGKLIFMHCLPAFHDTETEYGKEIKEKYGLTEMEVTDEVFRSKYARQFEEAENRMHSIKAIMAATLGNLFIPAVPEDFK.

Carbamoyl phosphate is bound by residues Ser-67–Thr-70, Gln-94, Arg-118, and His-145–Gln-148. Residues Asn-177, Asp-241, and Ser-245–Met-246 each bind L-ornithine. Residues Cys-284–Leu-285 and Arg-329 contribute to the carbamoyl phosphate site.

Belongs to the aspartate/ornithine carbamoyltransferase superfamily. OTCase family.

It is found in the cytoplasm. It carries out the reaction carbamoyl phosphate + L-ornithine = L-citrulline + phosphate + H(+). It participates in amino-acid degradation; L-arginine degradation via ADI pathway; carbamoyl phosphate from L-arginine: step 2/2. Reversibly catalyzes the transfer of the carbamoyl group from carbamoyl phosphate (CP) to the N(epsilon) atom of ornithine (ORN) to produce L-citrulline. The sequence is that of Ornithine carbamoyltransferase, catabolic (arcB) from Lactococcus lactis subsp. cremoris (strain MG1363).